The primary structure comprises 221 residues: Thiamine-phosphate synthase (221 aa).

4-amino-2-methyl-5-(diphosphooxymethyl)pyrimidine is bound by residues 44 to 48 (QLRLK) and N80. Mg(2+) is bound by residues D81 and D100. T119 provides a ligand contact to 4-amino-2-methyl-5-(diphosphooxymethyl)pyrimidine. 2-[(2R,5Z)-2-carboxy-4-methylthiazol-5(2H)-ylidene]ethyl phosphate is bound at residue 146–148 (TTT). K149 serves as a coordination point for 4-amino-2-methyl-5-(diphosphooxymethyl)pyrimidine. G176 contributes to the 2-[(2R,5Z)-2-carboxy-4-methylthiazol-5(2H)-ylidene]ethyl phosphate binding site.

Belongs to the thiamine-phosphate synthase family. The cofactor is Mg(2+).

It catalyses the reaction 2-[(2R,5Z)-2-carboxy-4-methylthiazol-5(2H)-ylidene]ethyl phosphate + 4-amino-2-methyl-5-(diphosphooxymethyl)pyrimidine + 2 H(+) = thiamine phosphate + CO2 + diphosphate. It carries out the reaction 2-(2-carboxy-4-methylthiazol-5-yl)ethyl phosphate + 4-amino-2-methyl-5-(diphosphooxymethyl)pyrimidine + 2 H(+) = thiamine phosphate + CO2 + diphosphate. The enzyme catalyses 4-methyl-5-(2-phosphooxyethyl)-thiazole + 4-amino-2-methyl-5-(diphosphooxymethyl)pyrimidine + H(+) = thiamine phosphate + diphosphate. The protein operates within cofactor biosynthesis; thiamine diphosphate biosynthesis; thiamine phosphate from 4-amino-2-methyl-5-diphosphomethylpyrimidine and 4-methyl-5-(2-phosphoethyl)-thiazole: step 1/1. Condenses 4-methyl-5-(beta-hydroxyethyl)thiazole monophosphate (THZ-P) and 2-methyl-4-amino-5-hydroxymethyl pyrimidine pyrophosphate (HMP-PP) to form thiamine monophosphate (TMP). The polypeptide is Thiamine-phosphate synthase (Hyphomonas neptunium (strain ATCC 15444)).